Consider the following 699-residue polypeptide: Auxin response factor 1 (699 aa).

The TF-B3 DNA-binding region spans 122–224 (FCKILTPSDT…EQRVGVRRLV (103 aa)). Disordered regions lie at residues 539-565 (TTTD…DSGQ) and 680-699 (EPHP…KTGF). Residues 595–684 (RTRIKVQMHG…DEKKIEPHPK (90 aa)) enclose the PB1 domain. Positions 687 to 699 (SSANPEQDQKTGF) are enriched in polar residues.

It belongs to the ARF family. Homodimers and heterodimers. Expressed in roots, culms, leaves and young panicles.

Its subcellular location is the nucleus. Auxin response factors (ARFs) are transcriptional factors that bind specifically to the DNA sequence 5'-TGTCTC-3' found in the auxin-responsive promoter elements (AuxREs). The protein is Auxin response factor 1 (ARF1) of Oryza sativa subsp. japonica (Rice).